Reading from the N-terminus, the 143-residue chain is uncharacterized protein (143 aa).

The next 2 membrane-spanning stretches (helical) occupy residues 20–39 and 113–135; these read FKYCSTSLFVLILFNSWITV and YFSLQISLSFAFSGICVKYITGL.

It localises to the membrane. This is an uncharacterized protein from Saccharomyces cerevisiae (strain ATCC 204508 / S288c) (Baker's yeast).